The primary structure comprises 404 residues: Lupus La protein homolog (404 aa).

The region spanning 7–99 (NEKMAALEAK…RRSPSKPLPE (93 aa)) is the HTH La-type RNA-binding domain. Phosphoserine occurs at positions 92 and 94. The RRM domain occupies 111 to 187 (RSVYIKGFPT…TDLLILFKED (77 aa)). An N6-acetyllysine modification is found at lysine 116. A Phosphothreonine modification is found at threonine 120. Lysine 128 carries the post-translational modification N6-acetyllysine. The residue at position 225 (serine 225) is a Phosphoserine. The 122-residue stretch at 227–348 (EEKIGCLLKF…KGKGNKAAQA (122 aa)) folds into the xRRM domain. An N6-acetyllysine mark is found at lysine 328 and lysine 341. A compositionally biased stretch (basic residues) spans 329-342 (WKSKGRRFKGKGKG). The interval 329–404 (WKSKGRRFKG…QKTENGAGDQ (76 aa)) is disordered. Over residues 343–354 (NKAAQAGSAKGK) the composition is skewed to low complexity. Position 360 is an N6-acetyllysine (lysine 360). A Phosphothreonine modification is found at threonine 362. A Phosphoserine modification is found at serine 366. Basic and acidic residues predominate over residues 381 to 391 (RAREETDKEPP).

In terms of assembly, interacts with DDX15. May interact with RUFY1. In terms of processing, phosphorylated in the C-terminal part of the protein.

It localises to the nucleus. Its function is as follows. Binds to the 3' poly(U) terminus of nascent RNA polymerase III transcripts, protecting them from exonuclease digestion and facilitating their folding and maturation. The sequence is that of Lupus La protein homolog (SSB) from Bos taurus (Bovine).